Here is a 297-residue protein sequence, read N- to C-terminus: Acetaldehyde dehydrogenase (297 aa).

Residue C128 is the Acyl-thioester intermediate of the active site. Residues 159 to 167 (SAGPGTRQN) and N272 each bind NAD(+).

Belongs to the acetaldehyde dehydrogenase family.

The catalysed reaction is acetaldehyde + NAD(+) + CoA = acetyl-CoA + NADH + H(+). The polypeptide is Acetaldehyde dehydrogenase (Desulfitobacterium hafniense (strain DSM 10664 / DCB-2)).